The chain runs to 177 residues: ATP synthase subunit delta (177 aa).

This sequence belongs to the ATPase delta chain family. As to quaternary structure, F-type ATPases have 2 components, F(1) - the catalytic core - and F(0) - the membrane proton channel. F(1) has five subunits: alpha(3), beta(3), gamma(1), delta(1), epsilon(1). F(0) has three main subunits: a(1), b(2) and c(10-14). The alpha and beta chains form an alternating ring which encloses part of the gamma chain. F(1) is attached to F(0) by a central stalk formed by the gamma and epsilon chains, while a peripheral stalk is formed by the delta and b chains.

It localises to the cell inner membrane. In terms of biological role, f(1)F(0) ATP synthase produces ATP from ADP in the presence of a proton or sodium gradient. F-type ATPases consist of two structural domains, F(1) containing the extramembraneous catalytic core and F(0) containing the membrane proton channel, linked together by a central stalk and a peripheral stalk. During catalysis, ATP synthesis in the catalytic domain of F(1) is coupled via a rotary mechanism of the central stalk subunits to proton translocation. Functionally, this protein is part of the stalk that links CF(0) to CF(1). It either transmits conformational changes from CF(0) to CF(1) or is implicated in proton conduction. The chain is ATP synthase subunit delta from Pseudoalteromonas translucida (strain TAC 125).